A 492-amino-acid polypeptide reads, in one-letter code: Ferruginol synthase (492 aa).

A helical membrane pass occupies residues 1–21; that stretch reads METIALLAALFFIALTCFLTS. Residues 22-492 are Cytoplasmic-facing; that stretch reads GRRRNLPPGP…VPLKIIPLRP (471 aa). Cysteine 436 lines the heme pocket.

This sequence belongs to the cytochrome P450 family. Heme is required as a cofactor.

It localises to the endoplasmic reticulum membrane. The catalysed reaction is abieta-8,11,13-triene + reduced [NADPH--hemoprotein reductase] + O2 = ferruginol + oxidized [NADPH--hemoprotein reductase] + H2O + H(+). It functions in the pathway secondary metabolite biosynthesis; terpenoid biosynthesis. Cytochrome P450 enzyme (CYP) which catalyzes a unique two-electron oxidation cascade on abieta-8,11,13-triene to produce ferruginol, an intermediate in tanshinone biosynthesis. This Isodon rubescens (Rabdosia rubescens) protein is Ferruginol synthase.